Here is a 313-residue protein sequence, read N- to C-terminus: MSAPDAGREDTRIPLVAVVGPTGTGKSELAIALARELDGEVVNADALQLYRGMDVGTAKLTPEERQGVPHHLLDVLEIHEEASVAAFQRDARRAVDEIRGRGRVPVLVGGSGLYVRAALDAIEFPGTDATVRARREEQLRERGRAALLRELAAVDPGSAERVKDDRRLVRALEVHDLTGRPFTSFMPERRYVQPTVQIGLAMDREVLNRRLAHRVDLMLERGWLEEVKALEARGLRESPTAGRALGYPQLLAVLDGSATLDEAREDTVAATRRFTKRQRTWFGADPRVHWLDAGDPNGIDGLTAGAVRLVAAQ.

20–27 lines the ATP pocket; it reads GPTGTGKS. 22-27 is a binding site for substrate; the sequence is TGTGKS.

Belongs to the IPP transferase family. Monomer. It depends on Mg(2+) as a cofactor.

The catalysed reaction is adenosine(37) in tRNA + dimethylallyl diphosphate = N(6)-dimethylallyladenosine(37) in tRNA + diphosphate. Functionally, catalyzes the transfer of a dimethylallyl group onto the adenine at position 37 in tRNAs that read codons beginning with uridine, leading to the formation of N6-(dimethylallyl)adenosine (i(6)A). The sequence is that of tRNA dimethylallyltransferase from Kocuria rhizophila (strain ATCC 9341 / DSM 348 / NBRC 103217 / DC2201).